Here is a 623-residue protein sequence, read N- to C-terminus: Glutathione import ATP-binding protein GsiA (623 aa).

ABC transporter domains lie at 15–269 (VSGL…QTLL) and 325–564 (LRSG…RKLM). ATP is bound by residues 49–56 (GESGSGKS) and 357–364 (GESGSGKS).

The protein belongs to the ABC transporter superfamily. Glutathione importer (TC 3.A.1.5.11) family. As to quaternary structure, the complex is composed of two ATP-binding proteins (GsiA), two transmembrane proteins (GsiC and GsiD) and a solute-binding protein (GsiB).

It localises to the cell inner membrane. It catalyses the reaction glutathione(out) + ATP + H2O = glutathione(in) + ADP + phosphate + H(+). In terms of biological role, part of the ABC transporter complex GsiABCD involved in glutathione import. Responsible for energy coupling to the transport system. This is Glutathione import ATP-binding protein GsiA from Salmonella choleraesuis (strain SC-B67).